Consider the following 181-residue polypeptide: Peptide deformylase 2 (181 aa).

Fe cation contacts are provided by C109 and H151. E152 is an active-site residue. H155 serves as a coordination point for Fe cation.

The protein belongs to the polypeptide deformylase family. The cofactor is Fe(2+).

The catalysed reaction is N-terminal N-formyl-L-methionyl-[peptide] + H2O = N-terminal L-methionyl-[peptide] + formate. Functionally, removes the formyl group from the N-terminal Met of newly synthesized proteins. Requires at least a dipeptide for an efficient rate of reaction. N-terminal L-methionine is a prerequisite for activity but the enzyme has broad specificity at other positions. The chain is Peptide deformylase 2 from Shewanella oneidensis (strain ATCC 700550 / JCM 31522 / CIP 106686 / LMG 19005 / NCIMB 14063 / MR-1).